The primary structure comprises 132 residues: Heat shock protein 15 homolog (132 aa).

The S4 RNA-binding domain maps to 11-73 (VRLDKWLWAA…DEREVRVLQV (63 aa)). 2 stretches are compositionally biased toward basic and acidic residues: residues 94 to 105 (LKKRAENSEARR) and 114 to 125 (PERRPDKQERRQ). The segment at 94–132 (LKKRAENSEARRFNSQFAPSPERRPDKQERRQLIKVKQY) is disordered.

The protein belongs to the HSP15 family.

In terms of biological role, may play an important role in binding of nucleic acid. More specific for RNA. The polypeptide is Heat shock protein 15 homolog (hslR) (Aeromonas salmonicida).